Here is a 293-residue protein sequence, read N- to C-terminus: ELMO domain-containing protein 2 (293 aa).

An ELMO domain is found at 126–282; sequence QHEELLMKLW…KFHEKIKGLL (157 aa).

As to expression, alveolar cells (morphologically type II cells) and alveolar macrophages (at protein level). Expressed in brain, colon, heart, kidney, liver, lung, muscle, placenta, small intestine, spleen, stomach and testis. In lung it is expressed in alveolar macrophages and alveolar walls.

Its function is as follows. Acts as a GTPase-activating protein (GAP) toward guanine nucleotide exchange factors like ARL2, ARL3, ARF1 and ARF6, but not for GTPases outside the Arf family. Regulates IFN-related antiviral responses. In Homo sapiens (Human), this protein is ELMO domain-containing protein 2 (ELMOD2).